Reading from the N-terminus, the 407-residue chain is tRNA (guanine(9)-N1)-methyltransferase (407 aa).

Over residues 1–19 (MDLDPAHKPSQAEETKEQG) the composition is skewed to basic and acidic residues. Disordered regions lie at residues 1–105 (MDLD…VRKR) and 220–256 (ENMIEPLQRSLTEKSPWARDEKDPLPLPDPEPEPRPE). The segment covering 20–32 (NEQGQVEQNQAQQ) has biased composition (low complexity). The segment covering 91 to 103 (LKRKDSRIARKVR) has biased composition (basic residues). An SAM-dependent MTase TRM10-type domain is found at 120-356 (ANKQKPPSVN…SVIPKRKGGK (237 aa)). S-adenosyl-L-methionine-binding positions include 263 to 264 (LS), G283, 287 to 291 (DKNRE), C295, L309, and 321 to 323 (TVL). The active-site Proton acceptor is the D287. The disordered stretch occupies residues 353 to 407 (KGGKLKEQQGASGETQETEEAEAEDPEEENEETKDPDAEASASKQNTPKVEVTSK). The segment covering 368–386 (QETEEAEAEDPEEENEETK) has biased composition (acidic residues). Residues 394 to 407 (ASKQNTPKVEVTSK) are compositionally biased toward polar residues.

The protein belongs to the class IV-like SAM-binding methyltransferase superfamily. TRM10 family. As to quaternary structure, monomer.

The protein resides in the cytoplasm. The protein localises to the nucleus. It carries out the reaction guanosine(9) in tRNA + S-adenosyl-L-methionine = N(1)-methylguanosine(9) in tRNA + S-adenosyl-L-homocysteine + H(+). In terms of biological role, S-adenosyl-L-methionine-dependent guanine N(1)-methyltransferase that catalyzes the formation of N(1)-methylguanine at position 9 (m1G9) in cytoplasmic tRNA. The chain is tRNA (guanine(9)-N1)-methyltransferase from Gibberella zeae (strain ATCC MYA-4620 / CBS 123657 / FGSC 9075 / NRRL 31084 / PH-1) (Wheat head blight fungus).